Consider the following 44-residue polypeptide: Thymosin beta-12 (44 aa).

2 stretches are compositionally biased toward basic and acidic residues: residues 1–25 (MSDK…ETQE) and 33–44 (ETIEQEKAAATS). Residues 1 to 44 (MSDKPDISEVTSFDKTKLKKTETQEKNPLPSKETIEQEKAAATS) form a disordered region. Residue S2 is modified to N-acetylserine.

This sequence belongs to the thymosin beta family.

It localises to the cytoplasm. The protein localises to the cytoskeleton. Plays an important role in the organization of the cytoskeleton. Binds to and sequesters actin monomers (G actin) and therefore inhibits actin polymerization. The protein is Thymosin beta-12 of Lateolabrax japonicus (Japanese sea perch).